The sequence spans 407 residues: Gonadotropin-releasing hormone receptor (407 aa).

Over M1–C36 the chain is Extracellular. N-linked (GlcNAc...) asparagine glycosylation is found at N5, N11, and N15. Residues V37–F57 form a helical membrane-spanning segment. Residues R58–L69 are Cytoplasmic-facing. Residues I70–I90 traverse the membrane as a helical segment. Residues W91–K105 are Extracellular-facing. C104 and C183 are disulfide-bonded. The helical transmembrane segment at I106–A126 threads the bilayer. Residues L127–R147 are Cytoplasmic-facing. A helical membrane pass occupies residues I148–F168. At Q169 to S199 the chain is on the extracellular side. A helical transmembrane segment spans residues S200–L220. Over K221–V268 the chain is Cytoplasmic. A helical membrane pass occupies residues I269–F289. The Extracellular portion of the chain corresponds to F290–V298. Residues I299–F319 form a helical membrane-spanning segment. The Cytoplasmic portion of the chain corresponds to T320–G407. The disordered stretch occupies residues S377–G407.

Belongs to the G-protein coupled receptor 1 family. Widely expressed in peripheral nervous tissue, gonadal tissue and brain. In the brain, expression is high in the palliovisceral lobe and superior buccal lobe but low in the subvertical lobe, superior and inferior frontal lobe, posterior brachial lobe and pedal lobe. Expressed in stomach, rectum, aorta, heart, salivary gland, branchia, pancreas, radula retractor muscle, branchial vessel but not in white body, esophagus, liver and kidney.

The protein localises to the cell membrane. In terms of biological role, receptor for gonadotropin releasing hormone (GnRH) that mediates the action of GnRH to stimulate the secretion of the gonadotropic hormones luteinizing hormone (LH) and follicle-stimulating hormone (FSH). This receptor mediates its action by association with G-proteins that activate a phosphatidylinositol-calcium second messenger system. Ligand interaction triggers steroidogenesis in spermatozoa and follicles. Appears to be involved in contraction of the radula retractor muscle. In Octopus vulgaris (Common octopus), this protein is Gonadotropin-releasing hormone receptor.